A 434-amino-acid polypeptide reads, in one-letter code: Trigger factor (434 aa).

Positions 160–245 (GDKVKMNFVG…LTEVQAANLP (86 aa)) constitute a PPIase FKBP-type domain.

This sequence belongs to the FKBP-type PPIase family. Tig subfamily.

It localises to the cytoplasm. The enzyme catalyses [protein]-peptidylproline (omega=180) = [protein]-peptidylproline (omega=0). Functionally, involved in protein export. Acts as a chaperone by maintaining the newly synthesized protein in an open conformation. Functions as a peptidyl-prolyl cis-trans isomerase. This is Trigger factor from Shewanella putrefaciens (strain CN-32 / ATCC BAA-453).